A 135-amino-acid chain; its full sequence is Small ribosomal subunit protein bS6 (135 aa).

Lysine 93 is modified (N6-acetyllysine). A disordered region spans residues 98-135 (EASPMVKAKDERRERRDDFANETADDAEAGDSEEEEEE). A compositionally biased stretch (basic and acidic residues) spans 104 to 116 (KAKDERRERRDDF). Residues 120–135 (TADDAEAGDSEEEEEE) are compositionally biased toward acidic residues.

It belongs to the bacterial ribosomal protein bS6 family. In terms of assembly, part of the 30S ribosomal subunit. Interacts weakly with uL2 in one of the 3.5 A resolved structures. 5 different forms of the protein, varying only in the number of C-terminal glutamate residues, were isolated. The sequence shown is form bS6-6, which is the longest. The first two Glu are encoded by the rpsF gene, the other Glu are added post-translationally by the RimK enzyme.

Functionally, binds together with bS18 to 16S ribosomal RNA. This chain is Small ribosomal subunit protein bS6 (rpsF), found in Escherichia coli (strain K12).